Reading from the N-terminus, the 195-residue chain is Heavy metal-associated isoprenylated plant protein 18 (195 aa).

Disordered stretches follow at residues 36–76 (DVVQ…KPET) and 145–172 (EKEK…NPSS). Basic and acidic residues-rich tracts occupy residues 47–76 (TVTK…KPET) and 145–157 (EKEK…ITKD). The HMA domain maps to 78 to 149 (TRKLEIHIAF…RIVKMEKEKK (72 aa)). Cysteine 192 is subject to Cysteine methyl ester. Residue cysteine 192 is the site of S-farnesyl cysteine attachment. A propeptide spans 193-195 (SIS) (removed in mature form).

The protein belongs to the HIPP family.

Functionally, probable heavy-metal-binding protein. Required for female gametophyte development and function. The chain is Heavy metal-associated isoprenylated plant protein 18 from Arabidopsis thaliana (Mouse-ear cress).